The chain runs to 266 residues: Small ribosomal subunit protein uS3 (266 aa).

Residues 39–107 (VREYLKKKLK…PVHVNIEEIR (69 aa)) form the KH type-2 domain. The segment at 218–266 (EVAEDKRPRRNARPGDRRPRRDGEGGAPGARRGAPRRGAGKPEDGKTGE) is disordered. Composition is skewed to basic and acidic residues over residues 230–241 (RPGDRRPRRDGE) and 257–266 (GKPEDGKTGE).

Belongs to the universal ribosomal protein uS3 family. In terms of assembly, part of the 30S ribosomal subunit. Forms a tight complex with proteins S10 and S14.

Its function is as follows. Binds the lower part of the 30S subunit head. Binds mRNA in the 70S ribosome, positioning it for translation. This Burkholderia multivorans (strain ATCC 17616 / 249) protein is Small ribosomal subunit protein uS3.